The primary structure comprises 286 residues: Shikimate dehydrogenase (NADP(+)) (286 aa).

Residues 19–21 (SLS) and Thr66 each bind shikimate. The active-site Proton acceptor is the Lys70. The shikimate site is built by Asn91 and Asp107. NADP(+) contacts are provided by residues 129–133 (GSGGA) and Leu229. A shikimate-binding site is contributed by Tyr231. Gly252 is a binding site for NADP(+).

Belongs to the shikimate dehydrogenase family. In terms of assembly, homodimer.

It carries out the reaction shikimate + NADP(+) = 3-dehydroshikimate + NADPH + H(+). The protein operates within metabolic intermediate biosynthesis; chorismate biosynthesis; chorismate from D-erythrose 4-phosphate and phosphoenolpyruvate: step 4/7. Its function is as follows. Involved in the biosynthesis of the chorismate, which leads to the biosynthesis of aromatic amino acids. Catalyzes the reversible NADPH linked reduction of 3-dehydroshikimate (DHSA) to yield shikimate (SA). The protein is Shikimate dehydrogenase (NADP(+)) of Prochlorococcus marinus (strain MIT 9215).